The following is a 389-amino-acid chain: Flagellar P-ring protein (389 aa).

The signal sequence occupies residues M1 to A33.

It belongs to the FlgI family. In terms of assembly, the basal body constitutes a major portion of the flagellar organelle and consists of four rings (L,P,S, and M) mounted on a central rod.

The protein resides in the periplasm. It is found in the bacterial flagellum basal body. Assembles around the rod to form the L-ring and probably protects the motor/basal body from shearing forces during rotation. This chain is Flagellar P-ring protein, found in Burkholderia mallei (strain ATCC 23344).